The following is a 434-amino-acid chain: Protein maelstrom homolog (434 aa).

The HMG box DNA-binding region spans 4 to 73 (RKASRNAYYF…AQGKDSGPSE (70 aa)). 2 disordered regions span residues 62–94 (RAAQGKDSGPSEKQKPVFTPLRKPGMLVPKQNV) and 357–385 (SHFNSANQEQRSNTPIGDYPSRAKISGQN). Over residues 357–371 (SHFNSANQEQRSNTP) the composition is skewed to polar residues.

This sequence belongs to the maelstrom family. In terms of assembly, interacts with SMARCB1, SIN3B and DDX4. Interacts with piRNA-associated proteins TDRD1, PIWIL1 and PIWIL2. Interacts with TEX19.

Its subcellular location is the cytoplasm. The protein localises to the nucleus. Its function is as follows. Plays a central role during spermatogenesis by repressing transposable elements and preventing their mobilization, which is essential for the germline integrity. Acts via the piRNA metabolic process, which mediates the repression of transposable elements during meiosis by forming complexes composed of piRNAs and Piwi proteins and governs the methylation and subsequent repression of transposons. Its association with piP-bodies suggests a participation in the secondary piRNAs metabolic process. Required for the localization of germ-cell factors to the meiotic nuage. The polypeptide is Protein maelstrom homolog (MAEL) (Macaca fascicularis (Crab-eating macaque)).